We begin with the raw amino-acid sequence, 626 residues long: Chaperone protein HtpG (626 aa).

An a; substrate-binding region spans residues 1-339 (MSQNQETRGF…SNDLPLNVSR (339 aa)). Positions 340-555 (EILQDNKITA…NDQMTTQMAK (216 aa)) are b. The tract at residues 556 to 626 (LFAAAGQPVP…FIKRINKLLG (71 aa)) is c.

The protein belongs to the heat shock protein 90 family. Homodimer.

It localises to the cytoplasm. Functionally, molecular chaperone. Has ATPase activity. The sequence is that of Chaperone protein HtpG from Haemophilus influenzae (strain PittGG).